We begin with the raw amino-acid sequence, 157 residues long: Nascent polypeptide-associated complex subunit beta (157 aa).

The tract at residues 1–31 (MPVDPEKLAKLQKSTAKKVGGSRVKAKKGVK) is disordered. Positions 33–98 (EQDDTKLIET…PQEKNITQLI (66 aa)) constitute an NAC-A/B domain. Positions 125-157 (NPKDFGAAGEAGATEEANEDIPDLVDQKFDDVE) are disordered. Residues 130 to 139 (GAAGEAGATE) show a composition bias toward low complexity.

The protein belongs to the NAC-beta family. Part of the nascent polypeptide-associated complex (NAC), consisting of EGD2 and EGD1. NAC associates with ribosomes via EGD1.

It localises to the cytoplasm. Its subcellular location is the nucleus. Functionally, component of the nascent polypeptide-associated complex (NAC), a dynamic component of the ribosomal exit tunnel, protecting the emerging polypeptides from interaction with other cytoplasmic proteins to ensure appropriate nascent protein targeting. The NAC complex also promotes mitochondrial protein import by enhancing productive ribosome interactions with the outer mitochondrial membrane and blocks the inappropriate interaction of ribosomes translating non-secretory nascent polypeptides with translocation sites in the membrane of the endoplasmic reticulum. EGD1 may act as a transcription factor that exert a negative effect on the expression of several genes that are transcribed by RNA polymerase II. In Lodderomyces elongisporus (strain ATCC 11503 / CBS 2605 / JCM 1781 / NBRC 1676 / NRRL YB-4239) (Yeast), this protein is Nascent polypeptide-associated complex subunit beta (EGD1).